We begin with the raw amino-acid sequence, 275 residues long: Dermonecrotic toxin LamSicTox-alphaIV1iii (275 aa).

Residue H5 is part of the active site. Mg(2+) contacts are provided by E25 and D27. The Nucleophile role is filled by H41. Disulfide bonds link C45/C51 and C47/C192. D85 lines the Mg(2+) pocket.

It belongs to the arthropod phospholipase D family. Class II subfamily. Mg(2+) serves as cofactor. In terms of tissue distribution, expressed by the venom gland.

It localises to the secreted. It carries out the reaction an N-(acyl)-sphingosylphosphocholine = an N-(acyl)-sphingosyl-1,3-cyclic phosphate + choline. The enzyme catalyses an N-(acyl)-sphingosylphosphoethanolamine = an N-(acyl)-sphingosyl-1,3-cyclic phosphate + ethanolamine. The catalysed reaction is a 1-acyl-sn-glycero-3-phosphocholine = a 1-acyl-sn-glycero-2,3-cyclic phosphate + choline. It catalyses the reaction a 1-acyl-sn-glycero-3-phosphoethanolamine = a 1-acyl-sn-glycero-2,3-cyclic phosphate + ethanolamine. Its function is as follows. Dermonecrotic toxins cleave the phosphodiester linkage between the phosphate and headgroup of certain phospholipids (sphingolipid and lysolipid substrates), forming an alcohol (often choline) and a cyclic phosphate. This toxin acts on sphingomyelin (SM). It may also act on ceramide phosphoethanolamine (CPE), lysophosphatidylcholine (LPC) and lysophosphatidylethanolamine (LPE), but not on lysophosphatidylserine (LPS), and lysophosphatidylglycerol (LPG). It acts by transphosphatidylation, releasing exclusively cyclic phosphate products as second products. Induces dermonecrosis, hemolysis, increased vascular permeability, edema, inflammatory response, and platelet aggregation. The chain is Dermonecrotic toxin LamSicTox-alphaIV1iii from Loxosceles amazonica (Recluse spider).